The sequence spans 356 residues: MKILKNDAYIRALLRESVDITPVWMMRQAGRYLPEYKKIRAQAGDFMSLCKNTQLACEVTLQPLRRYPLDAAILFSDILTIPDAMGLGLYFTTGEGPKFHFPIRMKADIEKLPIPDPEKELRYVMDLARTVRKELAGTVPLIGFAGSPWTIATYMVEGGSSKIFSRLKAMLYTEPATLHLLLNKLTQTVILYLNAQIQAGVQSIMIFDTWGGVLSGENYRIFSLNYMHQIIEGLTRENEGCKIPVTLFTKGGGQWLEAIAETGCDAIGLDWTTDIGEARHRVGDKVALQGNMDPAVLYAPAPIIEKEVASILGAFGKGTGHIFNLGHGVHQDTPPEHVRIFVDAVHRLSKNDAASG.

Substrate is bound by residues Arg27–Arg31, Asp77, Tyr154, Thr209, and His327.

Belongs to the uroporphyrinogen decarboxylase family. Homodimer.

It is found in the cytoplasm. The catalysed reaction is uroporphyrinogen III + 4 H(+) = coproporphyrinogen III + 4 CO2. Its pathway is porphyrin-containing compound metabolism; protoporphyrin-IX biosynthesis; coproporphyrinogen-III from 5-aminolevulinate: step 4/4. In terms of biological role, catalyzes the decarboxylation of four acetate groups of uroporphyrinogen-III to yield coproporphyrinogen-III. The protein is Uroporphyrinogen decarboxylase of Hamiltonella defensa subsp. Acyrthosiphon pisum (strain 5AT).